The primary structure comprises 290 residues: Homeobox protein EMX1 (290 aa).

Positions 192–251 form a DNA-binding region, homeobox; that stretch reads PKRIRTAFSPSQLLRLERAFEKNHYVVGAERKQLAGSLSLSETQVKVWFQNRRTKYKRQK. A disordered region spans residues 249–290; sequence RQKLEEEGPESEQKKKGSHHINRWRIATKQANGEDIDVTSND. Residues 250 to 263 show a composition bias toward basic and acidic residues; that stretch reads QKLEEEGPESEQKK.

It belongs to the EMX homeobox family. As to quaternary structure, interacts with WRD11 (via the N-terminal and the central portion of the protein); the interaction associates EMX1 with GLI3. Cerebral cortex.

It is found in the nucleus. The protein localises to the cytoplasm. Functionally, transcription factor, which in cooperation with EMX2, acts to generate the boundary between the roof and archipallium in the developing brain. May function in combinations with OTX1/2 to specify cell fates in the developing central nervous system. The protein is Homeobox protein EMX1 of Homo sapiens (Human).